We begin with the raw amino-acid sequence, 171 residues long: Small ribosomal subunit protein mS25 (171 aa).

This sequence belongs to the mitochondrion-specific ribosomal protein mS25 family. In terms of assembly, component of the mitochondrial ribosome small subunit (28S) which comprises a 12S rRNA and about 30 distinct proteins.

It is found in the mitochondrion. In Mus musculus (Mouse), this protein is Small ribosomal subunit protein mS25 (Mrps25).